The following is a 327-amino-acid chain: Gonadotropin-releasing hormone receptor (327 aa).

Residues 1 to 38 are Extracellular-facing; sequence MANNASLEQDQNHCSAINNSIPLTQGKLPTLTLSGKIR. N-linked (GlcNAc...) asparagine glycans are attached at residues Asn-4 and Asn-18. Residues 39–58 traverse the membrane as a helical segment; sequence VTVTFFLFLLSTAFNASFLV. The Cytoplasmic segment spans residues 59-77; that stretch reads KLQRWTQKRKKGKKLSRMK. Residues 78–97 traverse the membrane as a helical segment; that stretch reads VLLKHLTLANLLETLIVMPL. Topologically, residues 98 to 115 are extracellular; that stretch reads DGMWNITVQWYAGEFLCK. Asn-102 carries an N-linked (GlcNAc...) asparagine glycan. Cysteines 114 and 195 form a disulfide. The helical transmembrane segment at 116–137 threads the bilayer; the sequence is VLSYLKLFSMYAPAFMMVVISL. Topologically, residues 138–164 are cytoplasmic; that stretch reads DRSLAVTQPLAVQSKSKLERSMTSLAW. Residues 165 to 184 form a helical membrane-spanning segment; it reads ILSIVFAGPQLYIFRMIYLA. At 185–211 the chain is on the extracellular side; that stretch reads DGSGPAVFSQCVTHCSFPQWWHEAFYN. The chain crosses the membrane as a helical span at residues 212 to 231; that stretch reads FFTFSCLFIIPLLIMLICNA. Residues 232–280 are Cytoplasmic-facing; that stretch reads KIIFALTRVLHQDPRKLQLNQSKNNIPRARLRTLKMTVAFGTSFVICWT. Residues 281–299 form a helical membrane-spanning segment; that stretch reads PYYVLGIWYWFDPEMLNRV. The Extracellular segment spans residues 300–305; sequence SEPVNH. A helical membrane pass occupies residues 306 to 325; it reads FFFLFAFLNPCFDPLIYGYF. The Cytoplasmic portion of the chain corresponds to 326-327; sequence SL.

It belongs to the G-protein coupled receptor 1 family.

The protein localises to the cell membrane. Functionally, receptor for gonadotropin releasing hormone (GnRH) that mediates the action of GnRH to stimulate the secretion of the gonadotropic hormones luteinizing hormone (LH) and follicle-stimulating hormone (FSH). This receptor mediates its action by association with G-proteins that activate a phosphatidylinositol-calcium second messenger system. In Rattus norvegicus (Rat), this protein is Gonadotropin-releasing hormone receptor (Gnrhr).